A 517-amino-acid polypeptide reads, in one-letter code: Keratin-associated protein 16-1 (517 aa).

11 tandem repeats follow at residues 73–77 (CCDPV), 93–97 (CCEAT), 128–132 (CCQPV), 153–157 (CCEPA), 168–172 (CCQPV), 198–202 (CCQPV), 208–212 (CCSAV), 228–232 (CCQPV), 248–252 (CCDPS), 283–287 (CCVQS), and 303–307 (CCVSS). The interval 73–307 (CCDPVICEPS…CQEPSCCVSS (235 aa)) is 11 X 5 AA repeats of C-C-X(3). Residues 483 to 517 (VSEEAPCQPTEAKPISPTTREAAAAQPAASKPANC) form a disordered region. The segment covering 504-517 (AAAAQPAASKPANC) has biased composition (low complexity).

Belongs to the KRTAP type 16 family.

The chain is Keratin-associated protein 16-1 (KRTAP16-1) from Homo sapiens (Human).